The sequence spans 196 residues: NADH dehydrogenase [ubiquinone] 1 alpha subcomplex assembly factor 3 (196 aa).

A mitochondrion-targeting transit peptide spans 1-93 (MIARTLRTVG…RSVLSWNVNS (93 aa)).

Belongs to the NDUFAF3 family. As to quaternary structure, together with NdufAF4 associates with mitochondrial complex I assembly intermediates during its biogenesis.

The protein resides in the mitochondrion. Involved in the assembly of mitochondrial NADH:ubiquinone oxidoreductase complex (complex I). Together with NdufAF4, involved in biogenesis of complex 1 modules N, Q and P-peripheral, but not the P-distal module. Required for recruitment of the complex I assembly factor Timmdc1 to complex 1 assembly intermediates. This Drosophila melanogaster (Fruit fly) protein is NADH dehydrogenase [ubiquinone] 1 alpha subcomplex assembly factor 3.